The primary structure comprises 148 residues: uncharacterized protein (148 aa).

An N-terminal signal peptide occupies residues 1–19; the sequence is MLSNAKLLLSLAMASTALG. N-linked (GlcNAc...) asparagine glycans are attached at residues Asn-41 and Asn-59. Asn-127 is lipidated: GPI-anchor amidated asparagine. Residues 128–148 constitute a propeptide, removed in mature form; it reads AANARAIPGALGLAGAVMMLL.

It belongs to the SED1 family. In terms of processing, the GPI-anchor is attached to the protein in the endoplasmic reticulum and serves to target the protein to the cell surface. There, the glucosamine-inositol phospholipid moiety is cleaved off and the GPI-modified mannoprotein is covalently attached via its lipidless GPI glycan remnant to the 1,6-beta-glucan of the outer cell wall layer.

It is found in the secreted. Its subcellular location is the cell wall. It localises to the membrane. Functionally, cell wall protein that plays a role in adaptation and resistance to cell wall stress. This is an uncharacterized protein from Saccharomyces cerevisiae (strain ATCC 204508 / S288c) (Baker's yeast).